Consider the following 499-residue polypeptide: WASH complex subunit 1 (499 aa).

2 disordered regions span residues 317-433 (GPVR…GAVT) and 448-499 (RKGI…DGWN). Residues 333 to 363 (AAPPPPPPPPPPPPPPPPAQTSAIPSPPPFP) show a composition bias toward pro residues. Residues 391–413 (PRSELMAAIRNAGGVHGGRLRSP) enclose the WH2 domain. Residues 490–499 (HSEDDEDGWN) are compositionally biased toward acidic residues. Ser-491 is subject to Phosphoserine.

It belongs to the WASH1 family. Component of the WASH complex. Interacts with spir and capu. Interacts (via N-terminus) with Rho1 (via N-terminus).

Its function is as follows. Acts as a nucleation-promoting factor by activating the Arp2/3 complex to induce actin polymerization. Participates in both linear- and branched-actin networks. Functions in linear-filament (bundled F-actin) by acting downstream of Rho1 and regulating actin and microtubule organization during oogenesis. Nucleates actin in an Arp2/3-dependent manner and exhibits F-actin and microtubule bundling and cross-linking activity in the egg chamber. During embryogenesis, acts downstream of Rho1 to activate the Arp2/3 complex which is necessary for the developmental migration of tail hemocytes anteriorly along the ventral midline. Its function in hemocyte transmigration is independent of the WASH complex. May play a role in endosomal sorting; its assembly in the WASH complex may regulate its nucleation-promoting factor (NPF) activity. This Drosophila melanogaster (Fruit fly) protein is WASH complex subunit 1.